Consider the following 377-residue polypeptide: uncharacterized protein (377 aa).

Helical transmembrane passes span 26–46 (TFQN…VVAI), 67–87 (TVGS…WVII), 108–128 (FLTF…ISLT), and 135–155 (IDYG…ALYI).

The protein localises to the cell membrane. This is an uncharacterized protein from Methanocaldococcus jannaschii (strain ATCC 43067 / DSM 2661 / JAL-1 / JCM 10045 / NBRC 100440) (Methanococcus jannaschii).